We begin with the raw amino-acid sequence, 221 residues long: Large ribosomal subunit protein uL3 (221 aa).

Positions G140–S160 are disordered.

It belongs to the universal ribosomal protein uL3 family. As to quaternary structure, part of the 50S ribosomal subunit. Forms a cluster with proteins L14 and L19.

Functionally, one of the primary rRNA binding proteins, it binds directly near the 3'-end of the 23S rRNA, where it nucleates assembly of the 50S subunit. This chain is Large ribosomal subunit protein uL3, found in Chlamydia caviae (strain ATCC VR-813 / DSM 19441 / 03DC25 / GPIC) (Chlamydophila caviae).